We begin with the raw amino-acid sequence, 416 residues long: UDP-N-acetylmuramoylalanine--D-glutamate ligase (416 aa).

104-110 (GSNGKST) contacts ATP.

The protein belongs to the MurCDEF family.

It is found in the cytoplasm. The catalysed reaction is UDP-N-acetyl-alpha-D-muramoyl-L-alanine + D-glutamate + ATP = UDP-N-acetyl-alpha-D-muramoyl-L-alanyl-D-glutamate + ADP + phosphate + H(+). It participates in cell wall biogenesis; peptidoglycan biosynthesis. Functionally, cell wall formation. Catalyzes the addition of glutamate to the nucleotide precursor UDP-N-acetylmuramoyl-L-alanine (UMA). This Francisella tularensis subsp. holarctica (strain FTNF002-00 / FTA) protein is UDP-N-acetylmuramoylalanine--D-glutamate ligase.